A 275-amino-acid chain; its full sequence is N-(5'-phosphoribosyl)anthranilate isomerase 1, chloroplastic (275 aa).

The transit peptide at 1-32 directs the protein to the chloroplast; the sequence is MSTGISTDLHVHFGALNFSKTYKSGLSNRTVS.

It belongs to the TrpF family. In terms of tissue distribution, expressed in roots and shoots.

The protein resides in the plastid. The protein localises to the chloroplast. The catalysed reaction is N-(5-phospho-beta-D-ribosyl)anthranilate = 1-(2-carboxyphenylamino)-1-deoxy-D-ribulose 5-phosphate. It functions in the pathway amino-acid biosynthesis; L-tryptophan biosynthesis; L-tryptophan from chorismate: step 3/5. Functionally, catalyzes the conversion of 5-phosphoribosylanthranilate to l-(O-carboxyphenylamino)-l-deoxyribulose-5-phosphate, which is the third step of the tryptophan biosynthetic pathway. The protein is N-(5'-phosphoribosyl)anthranilate isomerase 1, chloroplastic (PAI1) of Arabidopsis thaliana (Mouse-ear cress).